The chain runs to 183 residues: CyanoP (183 aa).

The first 19 residues, 1-19 (MLQRFFATALAIFVVLLGG), serve as a signal peptide directing secretion. Cys-20 is lipidated: N-palmitoyl cysteine. Cys-20 is lipidated: S-diacylglycerol cysteine. 10 residues coordinate Zn(2+): Asp-31, Asp-34, Asp-54, His-58, Thr-63, Glu-87, Asp-91, His-142, Glu-163, and Glu-164.

It belongs to the PsbP family. CyanoP subfamily. Monomer. Present in very small amounts in PSII. It depends on Zn(2+) as a cofactor.

It is found in the cellular thylakoid membrane. In terms of biological role, plays a role in the early stages of photosystem II (PSII) assembly; binds to D2 (psbD) and may facilitate its incorporation into PSII. Present in less than 1% of PSII preparations. The polypeptide is CyanoP (Thermosynechococcus vestitus (strain NIES-2133 / IAM M-273 / BP-1)).